Here is a 380-residue protein sequence, read N- to C-terminus: Phospho-N-acetylmuramoyl-pentapeptide-transferase (380 aa).

Transmembrane regions (helical) follow at residues 26–46 (IVAA…IFIE), 75–95 (MGGA…ADLA), 98–118 (FVWA…TDDW), 135–155 (LVLQ…DWRF), 161–181 (FPWV…FVPS), 183–203 (LFNP…VIAT), 222–242 (VVSA…IAGF), 259–279 (LGVF…YNTY), 283–303 (VFMG…MAVL), 311–331 (AILH…VWSF), and 357–377 (KIIV…LLSI).

Belongs to the glycosyltransferase 4 family. MraY subfamily. The cofactor is Mg(2+).

The protein localises to the cell inner membrane. The enzyme catalyses UDP-N-acetyl-alpha-D-muramoyl-L-alanyl-gamma-D-glutamyl-meso-2,6-diaminopimeloyl-D-alanyl-D-alanine + di-trans,octa-cis-undecaprenyl phosphate = di-trans,octa-cis-undecaprenyl diphospho-N-acetyl-alpha-D-muramoyl-L-alanyl-D-glutamyl-meso-2,6-diaminopimeloyl-D-alanyl-D-alanine + UMP. The protein operates within cell wall biogenesis; peptidoglycan biosynthesis. Its function is as follows. Catalyzes the initial step of the lipid cycle reactions in the biosynthesis of the cell wall peptidoglycan: transfers peptidoglycan precursor phospho-MurNAc-pentapeptide from UDP-MurNAc-pentapeptide onto the lipid carrier undecaprenyl phosphate, yielding undecaprenyl-pyrophosphoryl-MurNAc-pentapeptide, known as lipid I. The chain is Phospho-N-acetylmuramoyl-pentapeptide-transferase from Anaeromyxobacter dehalogenans (strain 2CP-1 / ATCC BAA-258).